A 103-amino-acid chain; its full sequence is Large ribosomal subunit protein bL21 (103 aa).

The protein belongs to the bacterial ribosomal protein bL21 family. Part of the 50S ribosomal subunit. Contacts protein L20.

Its function is as follows. This protein binds to 23S rRNA in the presence of protein L20. This Clostridium perfringens (strain ATCC 13124 / DSM 756 / JCM 1290 / NCIMB 6125 / NCTC 8237 / Type A) protein is Large ribosomal subunit protein bL21.